The chain runs to 91 residues: Heat shock protein 30E (91 aa).

The interval 62-91 is disordered; the sequence is RDQIRQPGAPESEGTSPNTGKDGKDPGNSL. Positions 82 to 91 are enriched in basic and acidic residues; sequence KDGKDPGNSL.

The protein belongs to the small heat shock protein (HSP20) family.

This chain is Heat shock protein 30E (hsp30e), found in Xenopus laevis (African clawed frog).